We begin with the raw amino-acid sequence, 671 residues long: DNA ligase (671 aa).

NAD(+)-binding positions include 34–38 (DSEYD), 83–84 (SL), and glutamate 113. Lysine 115 functions as the N6-AMP-lysine intermediate in the catalytic mechanism. Residues arginine 136, glutamate 170, lysine 286, and lysine 310 each coordinate NAD(+). Zn(2+) is bound by residues cysteine 404, cysteine 407, cysteine 422, and cysteine 427. Residues 590-671 (EEAGVFAGKT…FTQAVEQSEQ (82 aa)) form the BRCT domain.

It belongs to the NAD-dependent DNA ligase family. LigA subfamily. Requires Mg(2+) as cofactor. The cofactor is Mn(2+).

The enzyme catalyses NAD(+) + (deoxyribonucleotide)n-3'-hydroxyl + 5'-phospho-(deoxyribonucleotide)m = (deoxyribonucleotide)n+m + AMP + beta-nicotinamide D-nucleotide.. DNA ligase that catalyzes the formation of phosphodiester linkages between 5'-phosphoryl and 3'-hydroxyl groups in double-stranded DNA using NAD as a coenzyme and as the energy source for the reaction. It is essential for DNA replication and repair of damaged DNA. This Shouchella clausii (strain KSM-K16) (Alkalihalobacillus clausii) protein is DNA ligase.